The primary structure comprises 439 residues: Branched-chain amino acid permease BrnQ (439 aa).

The Cytoplasmic portion of the chain corresponds to 1–9 (MTHQLRSRD). The helical transmembrane segment at 10 to 30 (IIALGFMTFALFVGAGNIIFP) threads the bilayer. Over 31–45 (PMVGLQAGEHVWTAA) the chain is Periplasmic. Residues 46–66 (FGFLITAVGLPVLTVVALAKV) form a helical membrane-spanning segment. Topologically, residues 67 to 79 (GGGVDSLSTPIGK) are cytoplasmic. Residues 80 to 100 (VAGVLLATVCYLAVGPLFATP) form a helical membrane-spanning segment. Over 101–118 (RTATVSFEVGIAPLTGDS) the chain is Periplasmic. Residues 119–139 (ALPLFIYSLVYFAIVILVSLY) traverse the membrane as a helical segment. Residues 140 to 149 (PGKLLDTVGN) are Cytoplasmic-facing. Residues 150 to 170 (FLAPLKIIALVILSVAAIVWP) traverse the membrane as a helical segment. The Periplasmic segment spans residues 171-189 (AGSISTATEAYQNAAFSNG). A helical membrane pass occupies residues 190–210 (FVNGYLTMDTLGAMVFGIVIV). Residues 211-226 (NAARSRGVTEARLLTR) are Cytoplasmic-facing. A helical transmembrane segment spans residues 227-247 (YTVWAGLMAGVGLTLLYLALF). At 248 to 277 (RLGSDSASLVDQSANGAAILHAYVQHTFGG) the chain is on the periplasmic side. The helical transmembrane segment at 278–298 (GGSFLLAALIFIACLVTAVGL) threads the bilayer. Topologically, residues 299–316 (TCACAEFFAQYVPLSYRT) are cytoplasmic. A helical membrane pass occupies residues 317–337 (LVFILGGFSMVVSNLGLSQLI). Residue Gln-338 is a topological domain, periplasmic. A helical transmembrane segment spans residues 339 to 359 (ISVPVLTAIYPPCIALVVLSF). The Cytoplasmic segment spans residues 360–369 (TRSWWHNSSR). Residues 370–390 (VIAPPMFISLLFGILDGIKAS) form a helical membrane-spanning segment. At 391–404 (AFSDILPSWAQRLP) the chain is on the periplasmic side. The helical transmembrane segment at 405 to 425 (LAEQGLAWLMPTVVMVVLAII) threads the bilayer. Residues 426–439 (WDRAAGRQVTSSAH) are Cytoplasmic-facing.

It belongs to the branched chain amino acid transporter family.

It is found in the cell inner membrane. Functionally, liv-II branched chain amino acid transport system, which transports leucine, valine and isoleucine. The sequence is that of Branched-chain amino acid permease BrnQ (brnQ) from Escherichia coli O157:H7.